Here is a 244-residue protein sequence, read N- to C-terminus: tRNA (guanine-N(7)-)-methyltransferase (244 aa).

A disordered region spans residues 1-20 (MTNPFDSAGSKAPPKPFTVS). S-adenosyl-L-methionine is bound by residues glutamate 75, glutamate 100, aspartate 127, and aspartate 150. Residue aspartate 150 is part of the active site. Position 154 (lysine 154) interacts with substrate. Positions 156 to 161 (RHNKRR) are interaction with RNA. Residues aspartate 186 and 223–226 (THFE) each bind substrate.

The protein belongs to the class I-like SAM-binding methyltransferase superfamily. TrmB family.

It catalyses the reaction guanosine(46) in tRNA + S-adenosyl-L-methionine = N(7)-methylguanosine(46) in tRNA + S-adenosyl-L-homocysteine. The protein operates within tRNA modification; N(7)-methylguanine-tRNA biosynthesis. Catalyzes the formation of N(7)-methylguanine at position 46 (m7G46) in tRNA. This chain is tRNA (guanine-N(7)-)-methyltransferase, found in Stenotrophomonas maltophilia (strain K279a).